A 501-amino-acid chain; its full sequence is MTAHLPILIVIIPLFVAMAARLLVRLSVPFTRGFVLAAALAVLASGAVALAETLVRGEPWRYYVSGWPPPWGIELVIDPLAGGLIVLVAFFGLAALVYAGPYLQGRTPREQGSFYALFLLAKAGLLGMCATGDLFNLYVFLEISSLAAYALIAFGGRRSIVAALRYLIIGTAAACFYLLGVGYLYAMTGSLNMADLAVLLPPLMDSPVVILALVFIVAGLGIKMALFPLHGWLPDAYSYTPAPVLAFMAAVMTKVSAYALYRILYFVTEAAGPVSPTLQVLGWMAAAGILFGSIMAIAQRDLWRMLAYSSVAQVGYIVLGLAVGNVLALYGALLHVLSHALVKGGLFFIAGGVSWETGVRRVSDFVGIAKKMPLTMGAFVAAALSMIGLPPTLGFFSKWYLVLGCLEAGAWVFVAVLVVSSLLTAVYFFRVIENAYLKGLPQPGARAERPVPPGARRFRLELPASMLVPILVLGIGVVVLGLFNEQIISNVIQYALPWRLP.

Transmembrane regions (helical) follow at residues 4 to 24 (HLPILIVIIPLFVAMAARLLV), 34 to 54 (FVLAAALAVLASGAVALAETL), 80 to 100 (LAGGLIVLVAFFGLAALVYAG), 112 to 132 (GSFYALFLLAKAGLLGMCATG), 134 to 154 (LFNLYVFLEISSLAAYALIAF), 167 to 187 (LIIGTAAACFYLLGVGYLYAM), 207 to 227 (PVVILALVFIVAGLGIKMALF), 241 to 261 (PAPVLAFMAAVMTKVSAYALY), 278 to 298 (LQVLGWMAAAGILFGSIMAIA), 314 to 334 (VGYIVLGLAVGNVLALYGALL), 335 to 355 (HVLSHALVKGGLFFIAGGVSW), 376 to 396 (MGAFVAAALSMIGLPPTLGFF), 409 to 429 (GAWVFVAVLVVSSLLTAVYFF), and 463 to 483 (PASMLVPILVLGIGVVVLGLF).

Belongs to the complex I subunit 2 family. NDH-1 is composed of 14 different subunits. Subunits NuoA, H, J, K, L, M, N constitute the membrane sector of the complex.

The protein localises to the cell membrane. The catalysed reaction is a quinone + NADH + 5 H(+)(in) = a quinol + NAD(+) + 4 H(+)(out). Its function is as follows. NDH-1 shuttles electrons from NADH, via FMN and iron-sulfur (Fe-S) centers, to quinones in the respiratory chain. The immediate electron acceptor for the enzyme in this species is believed to be a menaquinone. Couples the redox reaction to proton translocation (for every two electrons transferred, four hydrogen ions are translocated across the cytoplasmic membrane), and thus conserves the redox energy in a proton gradient. This chain is NADH-quinone oxidoreductase subunit N, found in Desulforudis audaxviator (strain MP104C).